The chain runs to 345 residues: Dense granule protein 4 (345 aa).

A signal peptide spans 1 to 20 (MQGTWFSLFVVVMVSHLACG). The segment covering 227–251 (SVSVSTEDSGLTGVKDSSSSESTVT) has biased composition (polar residues). The interval 227-271 (SVSVSTEDSGLTGVKDSSSSESTVTPADEAASESEEGDKTSRKSK) is disordered. The chain crosses the membrane as a helical span at residues 276-296 (ILTGLGVAATLAAAAAAAKAV). The interval 298–345 (GFGGTRTSTAPAEAGKTELDDGYRPPPFNPRPSPYAELLKDLERMRKE) is disordered. A compositionally biased stretch (pro residues) spans 321 to 330 (RPPPFNPRPS). Residues 335-345 (LLKDLERMRKE) show a composition bias toward basic and acidic residues.

O-glycosylated.

It localises to the secreted. The protein resides in the parasitophorous vacuole lumen. Its subcellular location is the parasitophorous vacuole membrane. The protein localises to the cytoplasmic vesicle. It is found in the secretory vesicle. Functionally, major granular component involved in excreted-secreted antigen (ESA) immunity. This chain is Dense granule protein 4 (GRA4), found in Toxoplasma gondii.